Here is a 201-residue protein sequence, read N- to C-terminus: Probable chemoreceptor glutamine deamidase CheD 1 (201 aa).

It belongs to the CheD family.

It carries out the reaction L-glutaminyl-[protein] + H2O = L-glutamyl-[protein] + NH4(+). In terms of biological role, probably deamidates glutamine residues to glutamate on methyl-accepting chemotaxis receptors (MCPs), playing an important role in chemotaxis. This Dechloromonas aromatica (strain RCB) protein is Probable chemoreceptor glutamine deamidase CheD 1.